The following is a 313-amino-acid chain: Pyrimidine-specific ribonucleoside hydrolase RihB (313 aa).

Residue Glu11 is the Proton acceptor of the active site. Glu11, Asp16, and Val124 together coordinate Ca(2+). Residues Gln227 and His239 each contribute to the substrate site. Asp240 contributes to the Ca(2+) binding site.

It belongs to the IUNH family. RihB subfamily. As to quaternary structure, homotetramer. The cofactor is Ca(2+).

It carries out the reaction a pyrimidine ribonucleoside + H2O = a pyrimidine nucleobase + D-ribose. Its function is as follows. Hydrolyzes cytidine or uridine to ribose and cytosine or uracil, respectively. Has a clear preference for cytidine over uridine. Strictly specific for ribonucleosides. The sequence is that of Pyrimidine-specific ribonucleoside hydrolase RihB from Shigella flexneri serotype 5b (strain 8401).